A 406-amino-acid chain; its full sequence is Imidazolonepropionase (406 aa).

Residues histidine 65 and histidine 67 each coordinate Fe(3+). Zn(2+) contacts are provided by histidine 65 and histidine 67. Positions 74, 137, and 170 each coordinate 4-imidazolone-5-propanoate. Residue tyrosine 137 participates in N-formimidoyl-L-glutamate binding. Histidine 235 is a binding site for Fe(3+). Histidine 235 is a binding site for Zn(2+). 4-imidazolone-5-propanoate is bound at residue glutamine 238. Aspartate 310 lines the Fe(3+) pocket. Aspartate 310 is a binding site for Zn(2+). Residues asparagine 312 and glycine 314 each coordinate N-formimidoyl-L-glutamate. Threonine 315 is a 4-imidazolone-5-propanoate binding site.

Belongs to the metallo-dependent hydrolases superfamily. HutI family. Requires Zn(2+) as cofactor. Fe(3+) is required as a cofactor.

It is found in the cytoplasm. The enzyme catalyses 4-imidazolone-5-propanoate + H2O = N-formimidoyl-L-glutamate. Its pathway is amino-acid degradation; L-histidine degradation into L-glutamate; N-formimidoyl-L-glutamate from L-histidine: step 3/3. Functionally, catalyzes the hydrolytic cleavage of the carbon-nitrogen bond in imidazolone-5-propanoate to yield N-formimidoyl-L-glutamate. It is the third step in the universal histidine degradation pathway. The sequence is that of Imidazolonepropionase from Vibrio vulnificus (strain YJ016).